We begin with the raw amino-acid sequence, 504 residues long: Deoxyguanosinetriphosphate triphosphohydrolase (504 aa).

One can recognise an HD domain in the interval 66–273 (RLTHSMEVQQ…MEAADDISYC (208 aa)).

This sequence belongs to the dGTPase family. Type 1 subfamily. As to quaternary structure, homotetramer. The cofactor is Mg(2+).

The catalysed reaction is dGTP + H2O = 2'-deoxyguanosine + triphosphate + H(+). DGTPase preferentially hydrolyzes dGTP over the other canonical NTPs. In Enterobacter sp. (strain 638), this protein is Deoxyguanosinetriphosphate triphosphohydrolase.